A 290-amino-acid chain; its full sequence is Cytochrome bo(3) ubiquinol oxidase subunit 2 (290 aa).

The first 24 residues, 1-24, serve as a signal peptide directing secretion; sequence MISINFNNFFKTLLLILIAFTLHG. Residue Cys25 is the site of N-palmitoyl cysteine attachment. Residue Cys25 is the site of S-diacylglycerol cysteine attachment. The Extracellular portion of the chain corresponds to 25 to 42; that stretch reads CDSILFNPHGIIAIQECS. The chain crosses the membrane as a helical span at residues 43–63; that stretch reads ILLISFLIMLFVIIPVIFMTI. Residues 64–87 lie on the Cytoplasmic side of the membrane; it reads YFSVKYRASNINAKYKPDWCDSKK. Residues 88 to 108 form a helical membrane-spanning segment; sequence IEIIVWTIPISIILFLAFVTW. Over 109–290 the chain is Extracellular; it reads NYSHILDPKK…TYSKNKVFKH (182 aa).

The protein belongs to the cytochrome c oxidase subunit 2 family. Heterooctamer of two A chains, two B chains, two C chains and two D chains.

Its subcellular location is the cell membrane. Its function is as follows. Cytochrome bo(3) ubiquinol terminal oxidase is the component of the aerobic respiratory chain of E.coli that predominates when cells are grown at high aeration. Has proton pump activity across the membrane in addition to electron transfer, pumping 2 protons/electron. The chain is Cytochrome bo(3) ubiquinol oxidase subunit 2 (cyoA) from Buchnera aphidicola subsp. Schizaphis graminum (strain Sg).